A 498-amino-acid chain; its full sequence is Ulvan-active sulfatase (498 aa).

A signal peptide spans 1–22 (MNSKKTGVIILGCIAFLHIACS). Residues D55, D56, C95, D266, and H267 each coordinate Ca(2+). Catalysis depends on C95, which acts as the Nucleophile. C95 is modified (3-oxoalanine (Cys)).

It belongs to the sulfatase family. Ca(2+) is required as a cofactor. In terms of processing, the conversion to 3-oxoalanine (also known as C-formylglycine, FGly), of a serine or cysteine residue in prokaryotes and of a cysteine residue in eukaryotes, is critical for catalytic activity. This post-translational modification is severely defective in multiple sulfatase deficiency (MSD).

Its subcellular location is the periplasm. In terms of biological role, sulfatase involved in ulvan degradation. Ulvan is the main polysaccharide component of the Ulvales (green seaweed) cell wall. It is composed of disaccharide building blocks comprising 3-sulfated rhamnose (Rha3S) linked to D-glucuronic acid (GlcA), L-iduronic acid (IduA), or D-xylose (Xyl). This Formosa agariphila (strain DSM 15362 / KCTC 12365 / LMG 23005 / KMM 3901 / M-2Alg 35-1) protein is Ulvan-active sulfatase.